Reading from the N-terminus, the 462-residue chain is ATP synthase subunit beta (462 aa).

Residue G152 to T159 participates in ATP binding.

This sequence belongs to the ATPase alpha/beta chains family. F-type ATPases have 2 components, CF(1) - the catalytic core - and CF(0) - the membrane proton channel. CF(1) has five subunits: alpha(3), beta(3), gamma(1), delta(1), epsilon(1). CF(0) has three main subunits: a(1), b(2) and c(9-12). The alpha and beta chains form an alternating ring which encloses part of the gamma chain. CF(1) is attached to CF(0) by a central stalk formed by the gamma and epsilon chains, while a peripheral stalk is formed by the delta and b chains.

Its subcellular location is the cell inner membrane. The catalysed reaction is ATP + H2O + 4 H(+)(in) = ADP + phosphate + 5 H(+)(out). Its function is as follows. Produces ATP from ADP in the presence of a proton gradient across the membrane. The catalytic sites are hosted primarily by the beta subunits. This chain is ATP synthase subunit beta, found in Tolumonas auensis (strain DSM 9187 / NBRC 110442 / TA 4).